The primary structure comprises 518 residues: Cyclin-L2 (518 aa).

Cyclin-like regions lie at residues 81-183 (ELIQ…RVLK) and 196-280 (KIIV…KILQ). The tract at residues 310 to 518 (AKGLLPGTAP…DHPGHSRHRR (209 aa)) is disordered. Phosphoserine is present on residues Ser328, Ser335, Ser345, Ser348, and Ser366. Positions 382 to 420 (RSREQSYSRSPSRSASPKRRKSDSGSTSGGSKSQSRSRS) are RS. The segment covering 405–427 (SGSTSGGSKSQSRSRSRSDSPPR) has biased composition (low complexity). Basic and acidic residues predominate over residues 438–450 (SEVRGSRKSKDCK). The segment covering 455 to 469 (KPHKSRSRSSSRSRS) has biased composition (basic residues). Composition is skewed to basic and acidic residues over residues 470-479 (RSRERTDNSG) and 487-512 (YYRD…DHPG).

It belongs to the cyclin family. Cyclin L subfamily. Interacts with CDK11A, CDK11B, CDK12, CDK13 and POLR2A, the hyperphosphorylated C-terminal domain (CTD) of RNA polymerase II. May form a ternary complex with CDK11B and casein kinase II (CKII). Interacts with pre-mRNA-splicing factors, including at least SRSF1, SRSF2 and SRSF7/SLU7. In terms of tissue distribution, widely expressed (at protein level).

Its subcellular location is the nucleus speckle. The protein resides in the nucleus. It localises to the nucleoplasm. Its function is as follows. Involved in pre-mRNA splicing. May induce cell death, possibly by acting on the transcription and RNA processing of apoptosis-related factors. The protein is Cyclin-L2 (Ccnl2) of Mus musculus (Mouse).